Consider the following 36-residue polypeptide: Potassium channel toxin alpha-KTx 1.9 (36 aa).

The protein belongs to the short scorpion toxin superfamily. Potassium channel inhibitor family. Alpha-KTx 01 subfamily. As to expression, expressed by the venom gland.

The protein resides in the secreted. Functionally, potent selective inhibitor of Kv1/KCNA voltage-gated potassium channels. This Centruroides limbatus (Bark scorpion) protein is Potassium channel toxin alpha-KTx 1.9.